The following is a 420-amino-acid chain: MNILNNNLYGMDKEIYEIIKNEKLRQNNVIELIASENFVSSAVLEAQGSILTNKYAEGYPSKRFYNGCDEVDKAEVLAIERAKKLFNCKYANVQPHSGSQANQAVYLALLQPCDTILGMSLDSGGHLTHGAAPNISGKWFNTVAYNVDKETYLIDYDEIKRLAVLHNPKLLIAGFSAYPRKIDFARFREIADKVGAYLMADIAHIAGLVATGEHQSPIPYAHVVTSTTHKTLRGPRGGLILSDYEEIGKKINSALFPGLQGGPLMHVIAAKAVAFLENLQPEYKCYIKQVISNAKALAISLQERGYDILTGGTDNHIVLVDLRKDGITGKCAANSLDRAGITCNKNAIPFDTTSPFVTSGIRFGTSACTTKGFKEKDFVLIGHMVAEILDGLKNNEDNSKTEQKVLSEVKKLIKLFPFYD.

Residues L121 and 125-127 each bind (6S)-5,6,7,8-tetrahydrofolate; that span reads GHL. The residue at position 230 (K230) is an N6-(pyridoxal phosphate)lysine. (6S)-5,6,7,8-tetrahydrofolate-binding positions include E246 and 354-356; that span reads SPF.

This sequence belongs to the SHMT family. As to quaternary structure, homodimer. The cofactor is pyridoxal 5'-phosphate.

The protein localises to the cytoplasm. The enzyme catalyses (6R)-5,10-methylene-5,6,7,8-tetrahydrofolate + glycine + H2O = (6S)-5,6,7,8-tetrahydrofolate + L-serine. The protein operates within one-carbon metabolism; tetrahydrofolate interconversion. It functions in the pathway amino-acid biosynthesis; glycine biosynthesis; glycine from L-serine: step 1/1. Its function is as follows. Catalyzes the reversible interconversion of serine and glycine with tetrahydrofolate (THF) serving as the one-carbon carrier. This reaction serves as the major source of one-carbon groups required for the biosynthesis of purines, thymidylate, methionine, and other important biomolecules. Also exhibits THF-independent aldolase activity toward beta-hydroxyamino acids, producing glycine and aldehydes, via a retro-aldol mechanism. The sequence is that of Serine hydroxymethyltransferase from Rickettsia typhi (strain ATCC VR-144 / Wilmington).